Reading from the N-terminus, the 274-residue chain is Regulator of G-protein signaling rgs-11 (274 aa).

The RGS domain occupies 137-256 (SPGLLAASKY…LEDPLYLDLL (120 aa)).

This is Regulator of G-protein signaling rgs-11 (rgs-11) from Caenorhabditis elegans.